A 65-amino-acid chain; its full sequence is Large ribosomal subunit protein bL35 (65 aa).

The protein belongs to the bacterial ribosomal protein bL35 family.

The sequence is that of Large ribosomal subunit protein bL35 from Geobacter sp. (strain M21).